A 663-amino-acid polypeptide reads, in one-letter code: Probable receptor-like protein kinase At1g49730 (663 aa).

A signal peptide spans methionine 1–alanine 25. Over alanine 26 to proline 254 the chain is Extracellular. 5 N-linked (GlcNAc...) asparagine glycosylation sites follow: asparagine 36, asparagine 46, asparagine 70, asparagine 101, and asparagine 171. The segment at serine 213–arginine 243 is disordered. The span at proline 224–arginine 243 shows a compositional bias: polar residues. A helical transmembrane segment spans residues threonine 255–isoleucine 275. At arginine 276–phenylalanine 663 the chain is on the cytoplasmic side. The 283-residue stretch at asparagine 327–phenylalanine 609 folds into the Protein kinase domain. Residues isoleucine 333–valine 341 and lysine 355 contribute to the ATP site. The active-site Proton acceptor is aspartate 451. The interval arginine 631–phenylalanine 663 is disordered. Low complexity predominate over residues serine 640–serine 652.

Belongs to the protein kinase superfamily. Ser/Thr protein kinase family.

It is found in the cell membrane. The catalysed reaction is L-seryl-[protein] + ATP = O-phospho-L-seryl-[protein] + ADP + H(+). It carries out the reaction L-threonyl-[protein] + ATP = O-phospho-L-threonyl-[protein] + ADP + H(+). The polypeptide is Probable receptor-like protein kinase At1g49730 (Arabidopsis thaliana (Mouse-ear cress)).